Here is a 558-residue protein sequence, read N- to C-terminus: 2-isopropylmalate synthase (558 aa).

The 276-residue stretch at 31–306 (PIWCAVDLRD…DPGIDFSNID (276 aa)) folds into the Pyruvate carboxyltransferase domain. The Mg(2+) site is built by aspartate 40, histidine 245, histidine 247, and asparagine 281. Residues 440–558 (AGSPYSFLEH…LCAANHLSDK (119 aa)) form a regulatory domain region.

It belongs to the alpha-IPM synthase/homocitrate synthase family. LeuA type 2 subfamily. Homodimer. Mg(2+) is required as a cofactor.

Its subcellular location is the cytoplasm. It carries out the reaction 3-methyl-2-oxobutanoate + acetyl-CoA + H2O = (2S)-2-isopropylmalate + CoA + H(+). It participates in amino-acid biosynthesis; L-leucine biosynthesis; L-leucine from 3-methyl-2-oxobutanoate: step 1/4. Functionally, catalyzes the condensation of the acetyl group of acetyl-CoA with 3-methyl-2-oxobutanoate (2-ketoisovalerate) to form 3-carboxy-3-hydroxy-4-methylpentanoate (2-isopropylmalate). This chain is 2-isopropylmalate synthase, found in Rhodospirillum rubrum (strain ATCC 11170 / ATH 1.1.1 / DSM 467 / LMG 4362 / NCIMB 8255 / S1).